A 447-amino-acid chain; its full sequence is UDP-glycosyltransferase 79B9 (447 aa).

Residues Ser260, 319-321, 336-344, and 358-361 contribute to the UDP-alpha-D-glucose site; these read VQQ, HCGFGSMWE, and LCDQ.

This sequence belongs to the UDP-glycosyltransferase family.

The polypeptide is UDP-glycosyltransferase 79B9 (UGT79B9) (Arabidopsis thaliana (Mouse-ear cress)).